The following is a 1060-amino-acid chain: Anoctamin-8 (1060 aa).

Positions 1–32 (MAEAASGAGDVTLEGERGKRPPPEGEPAAPAS) are disordered. The residue at position 2 (Ala2) is an N-acetylalanine. At 2 to 244 (AEAASGAGDV…DDICDYFGVK (243 aa)) the chain is on the cytoplasmic side. Over residues 14–23 (EGERGKRPPP) the composition is skewed to basic and acidic residues. Residues 245–265 (IAMYFAWLGFYTSAMVYPAVF) traverse the membrane as a helical segment. Residues 266–281 (GSVLYTFTEADQTSRD) lie on the Extracellular side of the membrane. A helical transmembrane segment spans residues 282-302 (VSCVVFALFNVIWSTLFLEEW). Topologically, residues 303-356 (KRRGAELAYKWGTLDSPGEAVEEPRPQFRGIRRISPITRAEEFYYPPWKRLLFQ) are cytoplasmic. Ser318 is modified (phosphoserine). The helical transmembrane segment at 357–377 (LLVSLPLCLACLICVFILMLG) threads the bilayer. The Extracellular segment spans residues 378-400 (CFQLQELVLSVKGLPRLVRFLPK). Residues 401–421 (VMLALLVSVSAEGYKKLAVWL) traverse the membrane as a helical segment. The Cytoplasmic segment spans residues 422–437 (NDMENYRLESTYERHL). The helical transmembrane segment at 438–458 (IIKVVLFQFVNSYLSLFYIGF) threads the bilayer. Topologically, residues 459 to 745 (YLKDMDRLKE…YEDTFQDYQE (287 aa)) are extracellular. Disordered regions lie at residues 529–605 (AQAD…SLLD), 619–640 (GAGR…SPTM), 653–672 (AEED…EPQT), and 680–723 (GEGR…HSPQ). A compositionally biased stretch (gly residues) spans 534–547 (GGAGSRRCLGGGCG). 2 stretches are compositionally biased toward acidic residues: residues 549–559 (PEEENEEEEEA) and 581–602 (EEDE…EEGS). At Ser665 the chain carries Phosphoserine. The segment covering 680-694 (GEGRDQGPDGDRDTE) has biased composition (basic and acidic residues). The N-linked (GlcNAc...) asparagine glycan is linked to Asn708. Residues 746–766 (MFVQFGYVVLFSSAFPLAALC) form a helical membrane-spanning segment. Over 767–802 (ALVNNLIEIRSDAFKLCTGLQRPFGRRVESIGQWQK) the chain is Cytoplasmic. Residue Ser796 is modified to Phosphoserine. A helical membrane pass occupies residues 803 to 823 (VMEAMGVLAIVVNCYLIGQCG). The Extracellular portion of the chain corresponds to 824-836 (QLQRLFPWLSPEA). The helical transmembrane segment at 837–857 (AIVSVVVLEHLALLVKYLIHV) threads the bilayer. At 858–1060 (AIPDIPGWVA…PRPEDAGHRP (203 aa)) the chain is on the cytoplasmic side. The segment at 884–1060 (HERQAQQRFQ…PRPEDAGHRP (177 aa)) is disordered. Composition is skewed to basic and acidic residues over residues 899–927 (RREE…EARA) and 935–950 (VAER…ERPR). A compositionally biased stretch (pro residues) spans 972–986 (TRPPAPTGCAPPPRS). The residue at position 991 (Arg991) is an Asymmetric dimethylarginine; alternate. The residue at position 991 (Arg991) is an Omega-N-methylarginine; alternate. Residue Arg999 is modified to Omega-N-methylarginine. The span at 1049-1060 (PEPRPEDAGHRP) shows a compositional bias: basic and acidic residues.

This sequence belongs to the anoctamin family. In terms of tissue distribution, predominant expression seen in epithelial tissues.

It localises to the cell membrane. In terms of biological role, does not exhibit calcium-activated chloride channel (CaCC) activity. The protein is Anoctamin-8 (Ano8) of Mus musculus (Mouse).